The chain runs to 149 residues: Transcriptional repressor NrdR (149 aa).

A zinc finger lies at 3–34 (CPFCAAEETKVVDSRLAADGYQIRRRRECTSC). Residues 49 to 139 (PYVIKNNGNR…VYLSFDDIEE (91 aa)) form the ATP-cone domain.

It belongs to the NrdR family. Zn(2+) serves as cofactor.

Functionally, negatively regulates transcription of bacterial ribonucleotide reductase nrd genes and operons by binding to NrdR-boxes. This is Transcriptional repressor NrdR from Actinobacillus pleuropneumoniae serotype 5b (strain L20).